Reading from the N-terminus, the 158-residue chain is Protein OPG060 (158 aa).

It belongs to the orthopoxvirus OPG058 family.

The chain is Protein OPG060 (OPG060) from Homo sapiens (Human).